A 293-amino-acid chain; its full sequence is Elongation factor Ts (293 aa).

An involved in Mg(2+) ion dislocation from EF-Tu region spans residues 80 to 83; it reads TDFV.

It belongs to the EF-Ts family.

It localises to the cytoplasm. In terms of biological role, associates with the EF-Tu.GDP complex and induces the exchange of GDP to GTP. It remains bound to the aminoacyl-tRNA.EF-Tu.GTP complex up to the GTP hydrolysis stage on the ribosome. This chain is Elongation factor Ts, found in Staphylococcus aureus (strain USA300).